Reading from the N-terminus, the 207-residue chain is Thiamine-phosphate synthase (207 aa).

4-amino-2-methyl-5-(diphosphooxymethyl)pyrimidine is bound by residues Q36–K40 and N68. The Mg(2+) site is built by D69 and D88. S106 lines the 4-amino-2-methyl-5-(diphosphooxymethyl)pyrimidine pocket. Position 132–134 (T132–T134) interacts with 2-[(2R,5Z)-2-carboxy-4-methylthiazol-5(2H)-ylidene]ethyl phosphate. K135 provides a ligand contact to 4-amino-2-methyl-5-(diphosphooxymethyl)pyrimidine. Residues G162 and V182–S183 each bind 2-[(2R,5Z)-2-carboxy-4-methylthiazol-5(2H)-ylidene]ethyl phosphate.

This sequence belongs to the thiamine-phosphate synthase family. The cofactor is Mg(2+).

The enzyme catalyses 2-[(2R,5Z)-2-carboxy-4-methylthiazol-5(2H)-ylidene]ethyl phosphate + 4-amino-2-methyl-5-(diphosphooxymethyl)pyrimidine + 2 H(+) = thiamine phosphate + CO2 + diphosphate. It catalyses the reaction 2-(2-carboxy-4-methylthiazol-5-yl)ethyl phosphate + 4-amino-2-methyl-5-(diphosphooxymethyl)pyrimidine + 2 H(+) = thiamine phosphate + CO2 + diphosphate. The catalysed reaction is 4-methyl-5-(2-phosphooxyethyl)-thiazole + 4-amino-2-methyl-5-(diphosphooxymethyl)pyrimidine + H(+) = thiamine phosphate + diphosphate. It participates in cofactor biosynthesis; thiamine diphosphate biosynthesis; thiamine phosphate from 4-amino-2-methyl-5-diphosphomethylpyrimidine and 4-methyl-5-(2-phosphoethyl)-thiazole: step 1/1. In terms of biological role, condenses 4-methyl-5-(beta-hydroxyethyl)thiazole monophosphate (THZ-P) and 2-methyl-4-amino-5-hydroxymethyl pyrimidine pyrophosphate (HMP-PP) to form thiamine monophosphate (TMP). In Methanococcus maripaludis (strain DSM 14266 / JCM 13030 / NBRC 101832 / S2 / LL), this protein is Thiamine-phosphate synthase.